The chain runs to 221 residues: Leucine rich adaptor protein 1-like (221 aa).

At Met1 the chain carries N-acetylmethionine. The interval 1-81 (MEDGPLPDLR…SGSPRRSHPS (81 aa)) is disordered. Composition is skewed to basic and acidic residues over residues 8–21 (DLRDIELKLGRKVP) and 28–39 (LRGEEPAPREGA). Over residues 48-75 (SCSSSSSCSSFAPSVSSSSSSSPASGSP) the composition is skewed to low complexity.

This Rattus norvegicus (Rat) protein is Leucine rich adaptor protein 1-like (Lurap1l).